Here is a 464-residue protein sequence, read N- to C-terminus: 3-isopropylmalate dehydratase large subunit (464 aa).

Positions 337, 397, and 400 each coordinate [4Fe-4S] cluster.

It belongs to the aconitase/IPM isomerase family. LeuC type 1 subfamily. In terms of assembly, heterodimer of LeuC and LeuD. It depends on [4Fe-4S] cluster as a cofactor.

It carries out the reaction (2R,3S)-3-isopropylmalate = (2S)-2-isopropylmalate. The protein operates within amino-acid biosynthesis; L-leucine biosynthesis; L-leucine from 3-methyl-2-oxobutanoate: step 2/4. Catalyzes the isomerization between 2-isopropylmalate and 3-isopropylmalate, via the formation of 2-isopropylmaleate. This Bacillus cereus (strain ZK / E33L) protein is 3-isopropylmalate dehydratase large subunit.